The sequence spans 100 residues: Urease subunit gamma (100 aa).

It belongs to the urease gamma subunit family. As to quaternary structure, heterotrimer of UreA (gamma), UreB (beta) and UreC (alpha) subunits. Three heterotrimers associate to form the active enzyme.

It localises to the cytoplasm. The catalysed reaction is urea + 2 H2O + H(+) = hydrogencarbonate + 2 NH4(+). Its pathway is nitrogen metabolism; urea degradation; CO(2) and NH(3) from urea (urease route): step 1/1. This chain is Urease subunit gamma, found in Saccharophagus degradans (strain 2-40 / ATCC 43961 / DSM 17024).